The sequence spans 324 residues: 7,8-didemethyl-8-hydroxy-5-deazariboflavin synthase (324 aa).

In terms of domain architecture, Radical SAM core spans 4 to 239 (VTYSKNVFIP…QEVAIQIPPN (236 aa)). Cys-18, Cys-22, and Cys-25 together coordinate [4Fe-4S] cluster.

The protein belongs to the radical SAM superfamily. CofG family. Consists of two subunits, CofG and CofH. It depends on [4Fe-4S] cluster as a cofactor.

It carries out the reaction 5-amino-5-(4-hydroxybenzyl)-6-(D-ribitylimino)-5,6-dihydrouracil + S-adenosyl-L-methionine = 7,8-didemethyl-8-hydroxy-5-deazariboflavin + 5'-deoxyadenosine + L-methionine + NH4(+) + H(+). The protein operates within cofactor biosynthesis; coenzyme F0 biosynthesis. Its function is as follows. Catalyzes the radical-mediated synthesis of 7,8-didemethyl-8-hydroxy-5-deazariboflavin from 5-amino-5-(4-hydroxybenzyl)-6-(D-ribitylimino)-5,6-dihydrouracil. This is 7,8-didemethyl-8-hydroxy-5-deazariboflavin synthase from Archaeoglobus fulgidus (strain ATCC 49558 / DSM 4304 / JCM 9628 / NBRC 100126 / VC-16).